A 46-amino-acid polypeptide reads, in one-letter code: Major cold shock protein (46 aa).

The CSD domain occupies 1–46; that stretch reads DKGFGFITPADGSKDVFVHFSAIQSNDFKTLDEGQKVEFSIENGAK.

In terms of assembly, homodimer.

It localises to the cytoplasm. The chain is Major cold shock protein (cspA) from Yersinia enterocolitica.